The sequence spans 658 residues: Protein teflon (658 aa).

Residues 33–56 form a C2H2-type 1 zinc finger; sequence LYCHFCRDLFTQLPEFLRHLQGAH. Disordered stretches follow at residues 78–127 and 151–175; these read EQDD…SEQK and HINN…SESN. Basic and acidic residues predominate over residues 100 to 111; it reads IPAKSEDSRAID. The span at 118–127 shows a compositional bias: polar residues; that stretch reads DNSPVKSEQK. The C2H2-type 2; degenerate zinc finger occupies 608 to 630; it reads YFCKCCDDIFTLNEDYTRHLVSQ. Residues 634 to 657 form a C2H2-type 3 zinc finger; the sequence is YQCTKCIKAFKYRGHFEKHLQNVH.

This sequence belongs to the Teflon family.

The protein resides in the nucleus. It is found in the chromosome. In terms of biological role, specifically required in males for proper segregation of autosomal bivalents at meiosis I. Expression is required in the male germ line prior to spermatocyte stage S4. May have a role as a bridging molecule maintaining adhesion to hold autosome bivalents together via heterochromatic connections. In Drosophila erecta (Fruit fly), this protein is Protein teflon.